The primary structure comprises 282 residues: Biotin synthase (282 aa).

The Radical SAM core domain occupies 1 to 230; that stretch reads MSDNKIYLCA…NQMLMIAGGR (230 aa). Cys-19, Cys-23, and Cys-26 together coordinate [4Fe-4S] cluster. [2Fe-2S] cluster is bound by residues Cys-63, Cys-98, and Cys-156.

It belongs to the radical SAM superfamily. Biotin synthase family. In terms of assembly, homodimer. [4Fe-4S] cluster serves as cofactor. [2Fe-2S] cluster is required as a cofactor.

The enzyme catalyses (4R,5S)-dethiobiotin + (sulfur carrier)-SH + 2 reduced [2Fe-2S]-[ferredoxin] + 2 S-adenosyl-L-methionine = (sulfur carrier)-H + biotin + 2 5'-deoxyadenosine + 2 L-methionine + 2 oxidized [2Fe-2S]-[ferredoxin]. Its pathway is cofactor biosynthesis; biotin biosynthesis; biotin from 7,8-diaminononanoate: step 2/2. Its function is as follows. Catalyzes the conversion of dethiobiotin (DTB) to biotin by the insertion of a sulfur atom into dethiobiotin via a radical-based mechanism. The polypeptide is Biotin synthase (Aliarcobacter butzleri (strain RM4018) (Arcobacter butzleri)).